The chain runs to 420 residues: Gamma-glutamyl phosphate reductase (420 aa).

It belongs to the gamma-glutamyl phosphate reductase family.

Its subcellular location is the cytoplasm. It catalyses the reaction L-glutamate 5-semialdehyde + phosphate + NADP(+) = L-glutamyl 5-phosphate + NADPH + H(+). Its pathway is amino-acid biosynthesis; L-proline biosynthesis; L-glutamate 5-semialdehyde from L-glutamate: step 2/2. Functionally, catalyzes the NADPH-dependent reduction of L-glutamate 5-phosphate into L-glutamate 5-semialdehyde and phosphate. The product spontaneously undergoes cyclization to form 1-pyrroline-5-carboxylate. The polypeptide is Gamma-glutamyl phosphate reductase (Streptococcus pneumoniae serotype 2 (strain D39 / NCTC 7466)).